Here is a 382-residue protein sequence, read N- to C-terminus: Protein delta homolog 2 (382 aa).

Positions 1 to 26 (MPSGCRCLNLVCLLCILGATSQPARA) are cleaved as a signal peptide. EGF-like domains follow at residues 27 to 58 (DDCS…LHCE), 62 to 89 (RMPG…KFCD), 91 to 129 (DEHI…RGCE), and 131 to 172 (KAGP…AHCE). Residues 27–305 (DDCSSHCDLA…RQEAGLGESS (279 aa)) lie on the Extracellular side of the membrane. Disulfide bonds link Cys29–Cys40, Cys33–Cys46, Cys48–Cys57, Cys66–Cys71, Cys79–Cys88, Cys95–Cys107, Cys101–Cys117, Cys119–Cys128, Cys135–Cys148, Cys142–Cys160, Cys162–Cys171, Cys178–Cys189, Cys183–Cys198, Cys200–Cys209, Cys216–Cys227, Cys221–Cys236, and Cys238–Cys247. The N-linked (GlcNAc...) asparagine glycan is linked to Asn157. The region spanning 174–210 (NVDDCLMRPCANGATCIDGINRFSCLCPEGFAGRFCT) is the EGF-like 5; calcium-binding domain. An EGF-like 6; calcium-binding domain is found at 212-248 (NLDDCASRPCQRGARCRDRVHDFDCLCPSGYGGKTCE). A helical transmembrane segment spans residues 306–326 (LVALVVFGSLTAALVLATVLL). Over 327 to 382 (TLRAWRRGICPTGPCCDPAPHYAPARQDQECQVSMLPAGFPLSPDLPPEPGKTTAL) the chain is Cytoplasmic.

The protein resides in the membrane. Its function is as follows. Regulates adipogenesis. The polypeptide is Protein delta homolog 2 (Dlk2) (Rattus norvegicus (Rat)).